We begin with the raw amino-acid sequence, 218 residues long: Cell division protein SepF (218 aa).

A disordered region spans residues 25–115 (DVAASTDNVI…IANRREQYQQ (91 aa)). Residues 29–43 (STDNVIPRSQQSVRA) are compositionally biased toward polar residues. Residues 47-63 (PKQEPRNNHVQQDHQAR) show a composition bias toward basic and acidic residues.

It belongs to the SepF family. In terms of assembly, homodimer. Interacts with FtsZ.

It is found in the cytoplasm. Its function is as follows. Cell division protein that is part of the divisome complex and is recruited early to the Z-ring. Probably stimulates Z-ring formation, perhaps through the cross-linking of FtsZ protofilaments. Its function overlaps with FtsA. This chain is Cell division protein SepF, found in Streptococcus pyogenes serotype M12 (strain MGAS2096).